The following is a 405-amino-acid chain: Cytoplasmic 60S subunit biogenesis factor ZNF622 (405 aa).

U1-type zinc fingers lie at residues 4–28 and 67–91; these read YTCITCRVAFKDADIQRAHYKTDWH and TYCTVCSKRFSTFNAYENHLKSKKH. Residues 135-230 are disordered; it reads AIRAQPSSSP…GVEEEEEKQA (96 aa). Acidic residues predominate over residues 194–228; it reads AEEEEDSEEGWEEMDSDEDLGSEEEMEGVEEEEEK.

The protein belongs to the REI1 family. In terms of assembly, homo- and heterodimer. Associates with pre-60S ribosomal particles. As to expression, mainly expressed in the ovary. In terms of tissue distribution, mainly expressed in the testis.

Its subcellular location is the cytoplasm. The protein resides in the nucleus. In terms of biological role, pre-60S-associated cytoplasmic factor involved in the cytoplasmic maturation of the 60S subunit. This is Cytoplasmic 60S subunit biogenesis factor ZNF622 (ZNF622) from Gallus gallus (Chicken).